Here is a 418-residue protein sequence, read N- to C-terminus: Lactosylceramide alpha-2,3-sialyltransferase (418 aa).

A disordered region spans residues 1–25 (MRTKAAGCAERRPLQPRTEAAAAPA). At 1–61 (MRTKAAGCAE…RAQSKMRRPS (61 aa)) the chain is on the cytoplasmic side. The helical; Signal-anchor for type II membrane protein transmembrane segment at 62-82 (LLLKDILKCTLLVFGVWILYI) threads the bilayer. The Lumenal segment spans residues 83–418 (LKLNYTTEEC…DLSGGIDREF (336 aa)). N-linked (GlcNAc...) asparagine glycans are attached at residues N86, N236, and N390. C195 and C353 form a disulfide bridge.

Belongs to the glycosyltransferase 29 family. N-glycosylated. As to expression, ubiquitous. High expression in brain, skeletal muscle, placenta, and testis. mRNA widely distributed in human brain, but slightly elevated expression was observed in the cerebral cortex, temporal lobe, and putamen.

The protein resides in the golgi apparatus membrane. The catalysed reaction is a beta-D-Gal-(1-&gt;4)-beta-D-Glc-(1&lt;-&gt;1)-Cer(d18:1(4E)) + CMP-N-acetyl-beta-neuraminate = a ganglioside GM3 (d18:1(4E)) + CMP + H(+). It catalyses the reaction ganglioside GA2 (d18:1(4E)/18:0) + CMP-N-acetyl-beta-neuraminate = ganglioside GM2 (d18:1(4E)/18:0) + CMP + H(+). The enzyme catalyses a beta-D-Gal-(1&lt;-&gt;1')-ceramide + CMP-N-acetyl-beta-neuraminate = N-acetyl-alpha-neuraminosyl-(2-&gt;3)-beta-D-galactosyl-(1&lt;-&gt;1')-ceramide + CMP + H(+). It carries out the reaction a beta-D-galactosyl-(1&lt;-&gt;1')-N-acylsphing-4-enine + CMP-N-acetyl-beta-neuraminate = a ganglioside GM4 (d18:1(4E)) + CMP + H(+). The catalysed reaction is ganglioside GA1 (d18:1(4E)/18:0) + CMP-N-acetyl-beta-neuraminate = ganglioside GM1 (d18:1(4E)/18:0) + CMP + H(+). Its pathway is glycolipid biosynthesis. Its function is as follows. Transfers the sialyl group (N-acetyl-alpha-neuraminyl or NeuAc) from CMP-NeuAc to the non-reducing terminal galactose (Gal) of glycosphingolipids forming gangliosides (important molecules involved in the regulation of multiple cellular processes, including cell proliferation and differentiation, apoptosis, embryogenesis, development, and oncogenesis). Mainly involved in the biosynthesis of ganglioside GM3 but can also use different glycolipids as substrate acceptors such as D-galactosylceramide (GalCer), asialo-GM2 (GA2) and asialo-GM1 (GA1), although less preferentially than beta-D-Gal-(1-&gt;4)-beta-D-Glc-(1&lt;-&gt;1)-Cer (LacCer). The sequence is that of Lactosylceramide alpha-2,3-sialyltransferase (ST3GAL5) from Homo sapiens (Human).